Reading from the N-terminus, the 310-residue chain is Biotin synthase (310 aa).

Residues 34-262 (GRVQLCALVN…TAQIRLSAGR (229 aa)) form the Radical SAM core domain. 3 residues coordinate [4Fe-4S] cluster: Cys49, Cys53, and Cys56. Residues Cys93, Cys125, Cys185, and Arg257 each coordinate [2Fe-2S] cluster.

Belongs to the radical SAM superfamily. Biotin synthase family. Homodimer. [4Fe-4S] cluster is required as a cofactor. The cofactor is [2Fe-2S] cluster.

The catalysed reaction is (4R,5S)-dethiobiotin + (sulfur carrier)-SH + 2 reduced [2Fe-2S]-[ferredoxin] + 2 S-adenosyl-L-methionine = (sulfur carrier)-H + biotin + 2 5'-deoxyadenosine + 2 L-methionine + 2 oxidized [2Fe-2S]-[ferredoxin]. It participates in cofactor biosynthesis; biotin biosynthesis; biotin from 7,8-diaminononanoate: step 2/2. In terms of biological role, catalyzes the conversion of dethiobiotin (DTB) to biotin by the insertion of a sulfur atom into dethiobiotin via a radical-based mechanism. In Synechococcus sp. (strain JA-3-3Ab) (Cyanobacteria bacterium Yellowstone A-Prime), this protein is Biotin synthase.